Consider the following 247-residue polypeptide: Cyclin-Q (247 aa).

The protein belongs to the cyclin family. Cyclin-like FAM58 subfamily.

Its function is as follows. May be an activating cyclin for the cyclin-associated kinase CDK10. In Danio rerio (Zebrafish), this protein is Cyclin-Q (ccnq).